A 347-amino-acid polypeptide reads, in one-letter code: UDP-3-O-acylglucosamine N-acyltransferase (347 aa).

The active-site Proton acceptor is His248.

The protein belongs to the transferase hexapeptide repeat family. LpxD subfamily. Homotrimer.

The catalysed reaction is a UDP-3-O-[(3R)-3-hydroxyacyl]-alpha-D-glucosamine + a (3R)-hydroxyacyl-[ACP] = a UDP-2-N,3-O-bis[(3R)-3-hydroxyacyl]-alpha-D-glucosamine + holo-[ACP] + H(+). It participates in bacterial outer membrane biogenesis; LPS lipid A biosynthesis. In terms of biological role, catalyzes the N-acylation of UDP-3-O-acylglucosamine using 3-hydroxyacyl-ACP as the acyl donor. Is involved in the biosynthesis of lipid A, a phosphorylated glycolipid that anchors the lipopolysaccharide to the outer membrane of the cell. The chain is UDP-3-O-acylglucosamine N-acyltransferase from Synechococcus sp. (strain CC9902).